The sequence spans 108 residues: E3 ubiquitin-protein ligase Midline-1 (108 aa).

The region spanning 1–100 (KSAPKHEWIG…IITGLPIPDH (100 aa)) is the B30.2/SPRY domain.

Belongs to the TRIM/RBCC family. In terms of assembly, homodimer or heterodimer with MID2. Interacts with IGBP1.

It localises to the cytoplasm. Its subcellular location is the cytoskeleton. It catalyses the reaction S-ubiquitinyl-[E2 ubiquitin-conjugating enzyme]-L-cysteine + [acceptor protein]-L-lysine = [E2 ubiquitin-conjugating enzyme]-L-cysteine + N(6)-ubiquitinyl-[acceptor protein]-L-lysine.. Functionally, has E3 ubiquitin ligase activity towards IGBP1, promoting its monoubiquitination, which results in deprotection of the catalytic subunit of protein phosphatase PP2A, and its subsequent degradation by polyubiquitination. The sequence is that of E3 ubiquitin-protein ligase Midline-1 (Mid1) from Mus caroli (Ryukyu mouse).